A 424-amino-acid polypeptide reads, in one-letter code: Phosphoribosylamine--glycine ligase (424 aa).

Residues 111–312 (KAFVKECGIK…LLDLCLATAK (202 aa)) enclose the ATP-grasp domain. 137–189 (IQNASFPLVIKALNKNTSIVYQEEEAIKILEDAFKQSNEPVIIEPFLEGFELS) lines the ATP pocket.

The protein belongs to the GARS family.

The enzyme catalyses 5-phospho-beta-D-ribosylamine + glycine + ATP = N(1)-(5-phospho-beta-D-ribosyl)glycinamide + ADP + phosphate + H(+). Its pathway is purine metabolism; IMP biosynthesis via de novo pathway; N(1)-(5-phospho-D-ribosyl)glycinamide from 5-phospho-alpha-D-ribose 1-diphosphate: step 2/2. This chain is Phosphoribosylamine--glycine ligase (purD), found in Helicobacter pylori (strain ATCC 700392 / 26695) (Campylobacter pylori).